The following is a 70-amino-acid chain: ATP synthase subunit epsilon, mitochondrial (70 aa).

Belongs to the eukaryotic ATPase epsilon family. In terms of assembly, F-type ATPases have 2 components, CF(1) - the catalytic core - and CF(0) - the membrane proton channel. CF(1) has five subunits: alpha(3), beta(3), gamma(1), delta(1), epsilon(1). CF(0) has three main subunits: a, b and c.

It is found in the mitochondrion. Its subcellular location is the mitochondrion inner membrane. Mitochondrial membrane ATP synthase (F(1)F(0) ATP synthase or Complex V) produces ATP from ADP in the presence of a proton gradient across the membrane which is generated by electron transport complexes of the respiratory chain. F-type ATPases consist of two structural domains, F(1) - containing the extramembraneous catalytic core, and F(0) - containing the membrane proton channel, linked together by a central stalk and a peripheral stalk. During catalysis, ATP synthesis in the catalytic domain of F(1) is coupled via a rotary mechanism of the central stalk subunits to proton translocation. Part of the complex F(1) domain and of the central stalk which is part of the complex rotary element. Rotation of the central stalk against the surrounding alpha(3)beta(3) subunits leads to hydrolysis of ATP in three separate catalytic sites on the beta subunits. In Ipomoea batatas (Sweet potato), this protein is ATP synthase subunit epsilon, mitochondrial.